The following is a 202-amino-acid chain: Casparian strip membrane protein 1 (202 aa).

Over residues 1-13 the composition is skewed to polar residues; sequence MEKSESSTIQIAE. The disordered stretch occupies residues 1-30; it reads MEKSESSTIQIAESSKDRKGKAPLLPPPVH. The Cytoplasmic portion of the chain corresponds to 1–42; that stretch reads MEKSESSTIQIAESSKDRKGKAPLLPPPVHHERAAGYKRGVA. A helical transmembrane segment spans residues 43–63; the sequence is IFDLILRISAATAALAATIVM. Residues 64–90 lie on the Extracellular side of the membrane; sequence GTTEQTLPFFTQFFQFRASYDDLPTFT. The chain crosses the membrane as a helical span at residues 91–111; that stretch reads FFVIAMAIVTGYLILSVPFSI. Over 112-130 the chain is Cytoplasmic; the sequence is VCIARPVVAAPRILLILCD. Residues 131-151 form a helical membrane-spanning segment; the sequence is TLTVTLATSAAGASAAIVYLA. The Extracellular segment spans residues 152-177; that stretch reads HNGXSDANWLAICQQFNDFCQRVSGA. Residues 178–198 traverse the membrane as a helical segment; the sequence is VVAAFVSAVLLIFLVVLSAIV. Residues 199–202 are Cytoplasmic-facing; that stretch reads LKKH.

Belongs to the Casparian strip membrane proteins (CASP) family. In terms of assembly, homodimer and heterodimers.

Its subcellular location is the cell membrane. Regulates membrane-cell wall junctions and localized cell wall deposition. Required for establishment of the Casparian strip membrane domain (CSD) and the subsequent formation of Casparian strips, a cell wall modification of the root endodermis that determines an apoplastic barrier between the intraorganismal apoplasm and the extraorganismal apoplasm and prevents lateral diffusion. The chain is Casparian strip membrane protein 1 from Triphysaria pusilla (Dwarf owl's-clover).